A 372-amino-acid chain; its full sequence is Oxoglutarate-dependent flavonoid 7-O-demethylase 1 (372 aa).

In terms of domain architecture, Fe2OG dioxygenase spans 221–321 (GIQALRMNYY…RLSVAAFLNP (101 aa)). 3 residues coordinate Fe cation: histidine 245, aspartate 247, and histidine 302. Arginine 312 contributes to the 2-oxoglutarate binding site.

This sequence belongs to the iron/ascorbate-dependent oxidoreductase family. In terms of assembly, monomer. The cofactor is Fe(2+). L-ascorbate is required as a cofactor. In terms of tissue distribution, accumulates in the trichomes of nevadensin-accumulating strains (e.g. cv. SD and cv. EMX-1) and in cv. SW (at protein level) but not in cv. MC.

It localises to the cytoplasm. It catalyses the reaction gardenin B + 2-oxoglutarate + O2 = nevadensin + formaldehyde + succinate + CO2 + H(+). The enzyme catalyses 8-hydroxysalvigenin + 2-oxoglutarate + O2 = pilosin + formaldehyde + succinate + CO2. Its pathway is flavonoid metabolism. Inhibited by prohexadione-calcium, a 2-oxoglutarate-dependent dioxygenase (2-ODD) inhibitor, thus leading to a decreased abundance of nevadensin (NEV) and absence of pilosin (PIL) production, but to the accumulation of gardenin B (GARD B) and 8-hydroxysalvigenin (8-OH-SALV). In terms of biological role, oxoglutarate-dependent dioxygenase (2-ODD) acting as a flavonoid 7-O-demethylase involved in the biosynthesis of polymethoxylated flavonoids natural products such as nevadensin and salvigenin, aroma compounds which contribute to the flavor of sweet basil, and exhibit pharmacological activities such as anti-allergic, anti-oxidant, antibacterial, anti-proliferative, and anti-inflammatory effects. Catalyzes the 7-O-demethylation of methoxylated flavones; mediates the conversion of 8-hydroxysalvigenin (8-OH-SALV) to pilosin (PIL) and of gardenin B (GARD B) to nevadensin (NEV). The chain is Oxoglutarate-dependent flavonoid 7-O-demethylase 1 from Ocimum basilicum (Sweet basil).